Here is a 34-residue protein sequence, read N- to C-terminus: Aspartate aminotransferase 2 (34 aa).

This sequence belongs to the class-I pyridoxal-phosphate-dependent aminotransferase family. As to quaternary structure, homodimer. Requires pyridoxal 5'-phosphate as cofactor.

The enzyme catalyses L-aspartate + 2-oxoglutarate = oxaloacetate + L-glutamate. In terms of biological role, important for the metabolism of amino acids and Krebs-cycle related organic acids. In plants, it is involved in nitrogen metabolism and in aspects of carbon and energy metabolism. This Pseudotsuga menziesii (Douglas-fir) protein is Aspartate aminotransferase 2.